Reading from the N-terminus, the 541-residue chain is CRISPR-associated exonuclease Cas4/endonuclease Cas1 fusion (541 aa).

The CRISPR-associated exonuclease Cas4 stretch occupies residues Met-1–Pro-179. Cys-9 lines the [4Fe-4S] cluster pocket. Mn(2+) is bound by residues Asp-65 and Glu-78. Positions 168, 171, and 177 each coordinate [4Fe-4S] cluster. The segment at Thr-204–Arg-541 is CRISPR-associated endonuclease Cas1. Glu-365, His-433, and Glu-448 together coordinate Mn(2+).

The protein in the N-terminal section; belongs to the CRISPR-associated exonuclease Cas4 family. It in the C-terminal section; belongs to the CRISPR-associated endonuclease Cas1 family. In terms of assembly, homodimer, forms a heterotetramer with a Cas2 homodimer. The cofactor is [4Fe-4S] cluster. It depends on Mg(2+) as a cofactor. Mn(2+) serves as cofactor.

It carries out the reaction exonucleolytic cleavage in the 5'- to 3'-direction to yield nucleoside 3'-phosphates.. Functionally, CRISPR (clustered regularly interspaced short palindromic repeat), is an adaptive immune system that provides protection against mobile genetic elements (viruses, transposable elements and conjugative plasmids). CRISPR clusters contain spacers, sequences complementary to antecedent mobile elements, and target invading nucleic acids. CRISPR clusters are transcribed and processed into CRISPR RNA (crRNA). The Cas4 region acts as a ssDNA exonuclease, while the Cas1 region acts as a dsDNA endonuclease. Involved in the integration of spacer DNA into the CRISPR cassette. This Leptospira interrogans serogroup Icterohaemorrhagiae serovar Lai (strain 56601) protein is CRISPR-associated exonuclease Cas4/endonuclease Cas1 fusion (cas4-cas1).